Reading from the N-terminus, the 234-residue chain is Phosphoglycolate phosphatase (234 aa).

D15 (nucleophile) is an active-site residue. Mg(2+)-binding residues include D15, D17, and D177.

This sequence belongs to the HAD-like hydrolase superfamily. CbbY/CbbZ/Gph/YieH family. Monomer. Mg(2+) serves as cofactor. Chloride is required as a cofactor.

The enzyme catalyses 2-phosphoglycolate + H2O = glycolate + phosphate. Its pathway is organic acid metabolism; glycolate biosynthesis; glycolate from 2-phosphoglycolate: step 1/1. Functionally, specifically catalyzes the dephosphorylation of 2-phosphoglycolate. Is involved in the dissimilation of the intracellular 2-phosphoglycolate formed during the DNA repair of 3'-phosphoglycolate ends, a major class of DNA lesions induced by oxidative stress. This Photorhabdus laumondii subsp. laumondii (strain DSM 15139 / CIP 105565 / TT01) (Photorhabdus luminescens subsp. laumondii) protein is Phosphoglycolate phosphatase.